Consider the following 375-residue polypeptide: Queuine tRNA-ribosyltransferase (375 aa).

Catalysis depends on Asp89, which acts as the Proton acceptor. Residues 89 to 93 (DSGGF), Asp143, Gln187, and Gly214 each bind substrate. An RNA binding region spans residues 245–251 (GVGKPED). Catalysis depends on Asp264, which acts as the Nucleophile. Positions 269 to 273 (TRNAR) are RNA binding; important for wobble base 34 recognition. Residues Cys302, Cys304, Cys307, and His333 each contribute to the Zn(2+) site.

The protein belongs to the queuine tRNA-ribosyltransferase family. In terms of assembly, homodimer. Within each dimer, one monomer is responsible for RNA recognition and catalysis, while the other monomer binds to the replacement base PreQ1. Zn(2+) serves as cofactor.

It catalyses the reaction 7-aminomethyl-7-carbaguanine + guanosine(34) in tRNA = 7-aminomethyl-7-carbaguanosine(34) in tRNA + guanine. It participates in tRNA modification; tRNA-queuosine biosynthesis. Functionally, catalyzes the base-exchange of a guanine (G) residue with the queuine precursor 7-aminomethyl-7-deazaguanine (PreQ1) at position 34 (anticodon wobble position) in tRNAs with GU(N) anticodons (tRNA-Asp, -Asn, -His and -Tyr). Catalysis occurs through a double-displacement mechanism. The nucleophile active site attacks the C1' of nucleotide 34 to detach the guanine base from the RNA, forming a covalent enzyme-RNA intermediate. The proton acceptor active site deprotonates the incoming PreQ1, allowing a nucleophilic attack on the C1' of the ribose to form the product. After dissociation, two additional enzymatic reactions on the tRNA convert PreQ1 to queuine (Q), resulting in the hypermodified nucleoside queuosine (7-(((4,5-cis-dihydroxy-2-cyclopenten-1-yl)amino)methyl)-7-deazaguanosine). This Citrobacter koseri (strain ATCC BAA-895 / CDC 4225-83 / SGSC4696) protein is Queuine tRNA-ribosyltransferase.